A 477-amino-acid chain; its full sequence is Glycogen synthase (477 aa).

An ADP-alpha-D-glucose-binding site is contributed by Lys15.

It belongs to the glycosyltransferase 1 family. Bacterial/plant glycogen synthase subfamily.

The catalysed reaction is [(1-&gt;4)-alpha-D-glucosyl](n) + ADP-alpha-D-glucose = [(1-&gt;4)-alpha-D-glucosyl](n+1) + ADP + H(+). It functions in the pathway glycan biosynthesis; glycogen biosynthesis. Functionally, synthesizes alpha-1,4-glucan chains using ADP-glucose. This is Glycogen synthase from Halorhodospira halophila (strain DSM 244 / SL1) (Ectothiorhodospira halophila (strain DSM 244 / SL1)).